The chain runs to 383 residues: Lipid-A-disaccharide synthase (383 aa).

Belongs to the LpxB family.

The catalysed reaction is 2-N,3-O-bis[(3R)-3-hydroxytetradecanoyl]-alpha-D-glucosaminyl 1-phosphate + UDP-2-N,3-O-bis[(3R)-3-hydroxytetradecanoyl]-alpha-D-glucosamine = lipid A disaccharide (E. coli) + UDP + H(+). It catalyses the reaction a lipid X + a UDP-2-N,3-O-bis[(3R)-3-hydroxyacyl]-alpha-D-glucosamine = a lipid A disaccharide + UDP + H(+). It participates in glycolipid biosynthesis; lipid IV(A) biosynthesis; lipid IV(A) from (3R)-3-hydroxytetradecanoyl-[acyl-carrier-protein] and UDP-N-acetyl-alpha-D-glucosamine: step 5/6. Condensation of UDP-2,3-diacylglucosamine and 2,3-diacylglucosamine-1-phosphate to form lipid A disaccharide, a precursor of lipid A, a phosphorylated glycolipid that anchors the lipopolysaccharide to the outer membrane of the cell. The sequence is that of Lipid-A-disaccharide synthase from Pectobacterium carotovorum subsp. carotovorum (strain PC1).